The primary structure comprises 115 residues: Probable prefoldin subunit 1 (115 aa).

The protein belongs to the prefoldin subunit beta family. Heterohexamer of two PFD-alpha type and four PFD-beta type subunits.

Its function is as follows. Binds specifically to cytosolic chaperonin (c-CPN) and transfers target proteins to it. Binds to nascent polypeptide chain and promotes folding in an environment in which there are many competing pathways for nonnative proteins. This Dictyostelium discoideum (Social amoeba) protein is Probable prefoldin subunit 1 (pfdn1).